The following is a 325-amino-acid chain: Solute-binding protein Bpro_4736 (325 aa).

The N-terminal stretch at 1–27 is a signal peptide; it reads MKTRTLKVLKPTLALLLAASFSAGALA. 168–173 contributes to the phenylglyoxylate binding site; the sequence is RISPVY.

This sequence belongs to the bacterial solute-binding protein 7 family. In terms of assembly, the complex is comprised of an extracytoplasmic solute-binding protein and a heteromeric permease formed by two transmembrane proteins.

It localises to the periplasm. Solute-binding protein that binds phenylglyoxylate (in vitro). Probably part of a tripartite ATP-independent periplasmic (TRAP) transport system that mediates solute transport into the cytoplasm. This chain is Solute-binding protein Bpro_4736, found in Polaromonas sp. (strain JS666 / ATCC BAA-500).